We begin with the raw amino-acid sequence, 238 residues long: ATP synthase subunit a (238 aa).

5 helical membrane-spanning segments follow: residues 16–36 (LIWL…TVLF), 79–99 (GLFM…FFPV), 103–123 (FVFG…SSLL), 129–149 (GLMS…MVVV), and 209–229 (VFGA…CVLL).

The protein belongs to the ATPase A chain family. As to quaternary structure, F-type ATPases have 2 components, CF(1) - the catalytic core - and CF(0) - the membrane proton channel. CF(1) has five subunits: alpha(3), beta(3), gamma(1), delta(1), epsilon(1). CF(0) has three main subunits: a, b and c.

It localises to the mitochondrion inner membrane. Functionally, mitochondrial membrane ATP synthase (F(1)F(0) ATP synthase or Complex V) produces ATP from ADP in the presence of a proton gradient across the membrane which is generated by electron transport complexes of the respiratory chain. F-type ATPases consist of two structural domains, F(1) - containing the extramembraneous catalytic core and F(0) - containing the membrane proton channel, linked together by a central stalk and a peripheral stalk. During catalysis, ATP synthesis in the catalytic domain of F(1) is coupled via a rotary mechanism of the central stalk subunits to proton translocation. Key component of the proton channel; it may play a direct role in the translocation of protons across the membrane. The polypeptide is ATP synthase subunit a (ATP6) (Mytilus edulis (Blue mussel)).